The following is a 1045-amino-acid chain: Isoleucine--tRNA ligase (1045 aa).

The short motif at proline 49–threonine 59 is the 'HIGH' region element. Positions lysine 591 to serine 595 match the 'KMSKS' region motif. Lysine 594 contributes to the ATP binding site.

Belongs to the class-I aminoacyl-tRNA synthetase family. IleS type 2 subfamily. As to quaternary structure, monomer. Requires Zn(2+) as cofactor.

It localises to the cytoplasm. It carries out the reaction tRNA(Ile) + L-isoleucine + ATP = L-isoleucyl-tRNA(Ile) + AMP + diphosphate. In terms of biological role, catalyzes the attachment of isoleucine to tRNA(Ile). As IleRS can inadvertently accommodate and process structurally similar amino acids such as valine, to avoid such errors it has two additional distinct tRNA(Ile)-dependent editing activities. One activity is designated as 'pretransfer' editing and involves the hydrolysis of activated Val-AMP. The other activity is designated 'posttransfer' editing and involves deacylation of mischarged Val-tRNA(Ile). The chain is Isoleucine--tRNA ligase from Methanothermobacter marburgensis (strain ATCC BAA-927 / DSM 2133 / JCM 14651 / NBRC 100331 / OCM 82 / Marburg) (Methanobacterium thermoautotrophicum).